Here is a 239-residue protein sequence, read N- to C-terminus: Transcription factor MYB10 (239 aa).

2 consecutive HTH myb-type domains span residues 11–63 and 64–118; these read KSQV…INYL and RPGL…KKRL. DNA-binding regions (H-T-H motif) lie at residues 39 to 63 and 91 to 114; these read WRSL…INYL and WSKI…NTHL.

As to expression, expressed in cauline leaves and siliques.

Its subcellular location is the nucleus. In terms of biological role, involved in metal ions homeostasis, including iron ions (Fe) acquisition, via the regulation of NAS4 and NAS2 genes expression. Necessary for plant survival in alkaline soil where iron availability is greatly restricted. Triggers tolerance to nickel (Ni) and zinc (Zn) ions. In Arabidopsis thaliana (Mouse-ear cress), this protein is Transcription factor MYB10.